Here is a 286-residue protein sequence, read N- to C-terminus: Bifunctional protein FolD (286 aa).

Residues 165 to 167 (GRS), Ser190, and Val231 contribute to the NADP(+) site.

The protein belongs to the tetrahydrofolate dehydrogenase/cyclohydrolase family. In terms of assembly, homodimer.

It carries out the reaction (6R)-5,10-methylene-5,6,7,8-tetrahydrofolate + NADP(+) = (6R)-5,10-methenyltetrahydrofolate + NADPH. The enzyme catalyses (6R)-5,10-methenyltetrahydrofolate + H2O = (6R)-10-formyltetrahydrofolate + H(+). Its pathway is one-carbon metabolism; tetrahydrofolate interconversion. Functionally, catalyzes the oxidation of 5,10-methylenetetrahydrofolate to 5,10-methenyltetrahydrofolate and then the hydrolysis of 5,10-methenyltetrahydrofolate to 10-formyltetrahydrofolate. This is Bifunctional protein FolD from Bacillus mycoides (strain KBAB4) (Bacillus weihenstephanensis).